Reading from the N-terminus, the 483-residue chain is Triacylglycerol lipase ptl3 (483 aa).

In terms of domain architecture, PNPLA spans 141-340 (LILSGGGTFG…DNDIPHAKLT (200 aa)). Residues 145–150 (GGGTFG) carry the GXGXXG motif. The short motif at 172–176 (GSSAG) is the GXSXG element. Residue Ser174 is the Nucleophile of the active site. Asp327 (proton acceptor) is an active-site residue.

It localises to the cytoplasm. The protein resides in the lipid droplet. The enzyme catalyses a triacylglycerol + H2O = a diacylglycerol + a fatty acid + H(+). Its function is as follows. Lipid particle-localized triacylglycerol (TAG) lipase. The lipid droplet/particle is a lipid storage compartment which serves as a depot of energy and building blocks for membrane lipid biosynthesis. Involved in the mobilization of the non-polar storage lipids triacylglycerols (TAGs) from lipid particles by hydrolysis of TAGs, releasing and supplying specific fatty acids to the appropriate metabolic pathways. The sequence is that of Triacylglycerol lipase ptl3 (ptl3) from Schizosaccharomyces pombe (strain 972 / ATCC 24843) (Fission yeast).